Here is a 339-residue protein sequence, read N- to C-terminus: Phenylalanine--tRNA ligase alpha subunit (339 aa).

E254 is a Mg(2+) binding site.

Belongs to the class-II aminoacyl-tRNA synthetase family. Phe-tRNA synthetase alpha subunit type 1 subfamily. As to quaternary structure, tetramer of two alpha and two beta subunits. Requires Mg(2+) as cofactor.

The protein resides in the cytoplasm. It carries out the reaction tRNA(Phe) + L-phenylalanine + ATP = L-phenylalanyl-tRNA(Phe) + AMP + diphosphate + H(+). In Clostridium acetobutylicum (strain ATCC 824 / DSM 792 / JCM 1419 / IAM 19013 / LMG 5710 / NBRC 13948 / NRRL B-527 / VKM B-1787 / 2291 / W), this protein is Phenylalanine--tRNA ligase alpha subunit.